We begin with the raw amino-acid sequence, 213 residues long: Virulence factor 1 (213 aa).

The protein localises to the host mitochondrion. Its function is as follows. Plays a role in antagonizing the host innate immune response. This is Virulence factor 1 from Norovirus (isolate Mouse/NoV/United States/MNV1/2002/GV) (MNV-1).